Consider the following 362-residue polypeptide: MAHHDPINLMTPPAGLAQLNERSREIFRQIVESYLATGEPVGSRNISRLIAVPLSPASVRNVMADLEQLGLIYAPHTSAGRLPTEAGLRFFVDALMQVGDMTEAERQSIQSQLAAVGRAQSVEAALDEALTRLSGLTRAAAVVLTAKSNTRLKHIEFVRLEPEQALVVLVGEDGQVENRVLTLPPGVPSSALTEASNFLNARIRGRTLAEARLELETALAQDRAELDQLTQKVIAAGVASWSGGDSDDRQLIVRGHANLLEDLHALDDLERVRRLFDDLETKRGVVDLLGRAESAEGVRIFIGSENKLFSLSGSSTIVSPYSDATGRIVGVLGVIGPTRLNYARVIPTVDYAARLLSRLMGG.

It belongs to the HrcA family.

In terms of biological role, negative regulator of class I heat shock genes (grpE-dnaK-dnaJ and groELS operons). Prevents heat-shock induction of these operons. This chain is Heat-inducible transcription repressor HrcA, found in Bradyrhizobium sp. (strain ORS 278).